A 201-amino-acid chain; its full sequence is 3-isopropylmalate dehydratase small subunit (201 aa).

This sequence belongs to the LeuD family. LeuD type 1 subfamily. In terms of assembly, heterodimer of LeuC and LeuD.

It carries out the reaction (2R,3S)-3-isopropylmalate = (2S)-2-isopropylmalate. It participates in amino-acid biosynthesis; L-leucine biosynthesis; L-leucine from 3-methyl-2-oxobutanoate: step 2/4. Functionally, catalyzes the isomerization between 2-isopropylmalate and 3-isopropylmalate, via the formation of 2-isopropylmaleate. The chain is 3-isopropylmalate dehydratase small subunit from Mesorhizobium japonicum (strain LMG 29417 / CECT 9101 / MAFF 303099) (Mesorhizobium loti (strain MAFF 303099)).